A 340-amino-acid polypeptide reads, in one-letter code: MGRGRAPCCAKVGLNRGSWTPQEDMRLIAYIQKHGHTNWRALPKQAGLLRCGKSCRLRWINYLRPDLKRGNFTDEEEEAIIRLHGLLGNKWSKIAACLPGRTDNEIKNVWNTHLKKKVAQREKKKAGAGSGDAGTPATAPLSSATSSTTTHNSSGGSDSGDQCGTSREPDATDVCTLQPEDMDVSDMLVDGAPPAAQPMPSPSSSSSLTTCVGGVEELIELPVIDIEPEIWSIIDGESAVARHGGDAAAPCTGTGTAVSTSEAEEAAANDWWLENLEKELGLWGYAEEDTQAHPDLLDHYTGLSPLCALEGDPVSTYFQTGPAAAEPELLVVVEPSAVLL.

HTH myb-type domains lie at lysine 11–leucine 63 and arginine 64–valine 118. 2 DNA-binding regions (H-T-H motif) span residues tryptophan 39–leucine 63 and tryptophan 91–leucine 114. A compositionally biased stretch (basic residues) spans lysine 116–alanine 126. 2 disordered regions span residues lysine 116–aspartate 173 and aspartate 190–threonine 209. Over residues alanine 133–serine 166 the composition is skewed to low complexity.

The protein localises to the nucleus. Its function is as follows. Transcription factor that positively regulates genes involved in anthocyanin biosynthesis such as A1. In Zea mays (Maize), this protein is Myb-related protein Zm1.